A 460-amino-acid polypeptide reads, in one-letter code: Cysteine--tRNA ligase (460 aa).

A Zn(2+)-binding site is contributed by C28. A 'HIGH' region motif is present at residues 30-40 (MTVYDYCHLGH). Zn(2+)-binding residues include C209, H234, and E238. A 'KMSKS' region motif is present at residues 266–270 (KMSKS). K269 provides a ligand contact to ATP.

The protein belongs to the class-I aminoacyl-tRNA synthetase family. In terms of assembly, monomer. Requires Zn(2+) as cofactor.

The protein localises to the cytoplasm. It carries out the reaction tRNA(Cys) + L-cysteine + ATP = L-cysteinyl-tRNA(Cys) + AMP + diphosphate. In Pseudomonas putida (strain GB-1), this protein is Cysteine--tRNA ligase.